Consider the following 613-residue polypeptide: AP-5 complex subunit mu (613 aa).

Residues 309-563 (KQRLLFTIHE…DYAKVSFKIV (255 aa)) form the MHD domain. The interval 501-522 (SPLQSRRKGDGDDEESEDESAE) is disordered. Residues 511–521 (GDDEESEDESA) are compositionally biased toward acidic residues.

The protein belongs to the adaptor complexes medium subunit family. As to quaternary structure, probably part of the adaptor protein complex 5 (AP-5).

It is found in the cytoplasmic vesicle membrane. This is AP-5 complex subunit mu (AP5M) from Arabidopsis thaliana (Mouse-ear cress).